Reading from the N-terminus, the 95-residue chain is Aspartyl/glutamyl-tRNA(Asn/Gln) amidotransferase subunit C (95 aa).

This sequence belongs to the GatC family. In terms of assembly, heterotrimer of A, B and C subunits.

The enzyme catalyses L-glutamyl-tRNA(Gln) + L-glutamine + ATP + H2O = L-glutaminyl-tRNA(Gln) + L-glutamate + ADP + phosphate + H(+). It catalyses the reaction L-aspartyl-tRNA(Asn) + L-glutamine + ATP + H2O = L-asparaginyl-tRNA(Asn) + L-glutamate + ADP + phosphate + 2 H(+). Allows the formation of correctly charged Asn-tRNA(Asn) or Gln-tRNA(Gln) through the transamidation of misacylated Asp-tRNA(Asn) or Glu-tRNA(Gln) in organisms which lack either or both of asparaginyl-tRNA or glutaminyl-tRNA synthetases. The reaction takes place in the presence of glutamine and ATP through an activated phospho-Asp-tRNA(Asn) or phospho-Glu-tRNA(Gln). In Pseudomonas paraeruginosa (strain DSM 24068 / PA7) (Pseudomonas aeruginosa (strain PA7)), this protein is Aspartyl/glutamyl-tRNA(Asn/Gln) amidotransferase subunit C.